Here is a 242-residue protein sequence, read N- to C-terminus: Large ribosomal subunit protein uL1 (242 aa).

It belongs to the universal ribosomal protein uL1 family. As to quaternary structure, part of the 50S ribosomal subunit.

Binds directly to 23S rRNA. The L1 stalk is quite mobile in the ribosome, and is involved in E site tRNA release. Functionally, protein L1 is also a translational repressor protein, it controls the translation of the L11 operon by binding to its mRNA. This chain is Large ribosomal subunit protein uL1, found in Wigglesworthia glossinidia brevipalpis.